A 146-amino-acid chain; its full sequence is Probable NADH dehydrogenase [ubiquinone] 1 alpha subcomplex subunit 12 (146 aa).

It belongs to the complex I NDUFA12 subunit family. As to quaternary structure, complex I is composed of 45 different subunits.

It localises to the mitochondrion inner membrane. Accessory subunit of the mitochondrial membrane respiratory chain NADH dehydrogenase (Complex I), that is believed not to be involved in catalysis. Complex I functions in the transfer of electrons from NADH to the respiratory chain. The immediate electron acceptor for the enzyme is believed to be ubiquinone. The polypeptide is Probable NADH dehydrogenase [ubiquinone] 1 alpha subcomplex subunit 12 (Caenorhabditis elegans).